Consider the following 382-residue polypeptide: Carbamoyl phosphate synthase small chain (382 aa).

The interval 1–189 (MIKSALLVLE…GLPEAKKEDE (189 aa)) is CPSase. The L-glutamine site is built by S47, G241, and G243. The Glutamine amidotransferase type-1 domain occupies 193–380 (HVVAYDFGAK…IELIEQYRKT (188 aa)). C269 serves as the catalytic Nucleophile. L-glutamine-binding residues include L270, Q273, N311, G313, and F314. Catalysis depends on residues H353 and E355.

It belongs to the CarA family. Composed of two chains; the small (or glutamine) chain promotes the hydrolysis of glutamine to ammonia, which is used by the large (or ammonia) chain to synthesize carbamoyl phosphate. Tetramer of heterodimers (alpha,beta)4.

It carries out the reaction hydrogencarbonate + L-glutamine + 2 ATP + H2O = carbamoyl phosphate + L-glutamate + 2 ADP + phosphate + 2 H(+). The enzyme catalyses L-glutamine + H2O = L-glutamate + NH4(+). It functions in the pathway amino-acid biosynthesis; L-arginine biosynthesis; carbamoyl phosphate from bicarbonate: step 1/1. It participates in pyrimidine metabolism; UMP biosynthesis via de novo pathway; (S)-dihydroorotate from bicarbonate: step 1/3. Functionally, small subunit of the glutamine-dependent carbamoyl phosphate synthetase (CPSase). CPSase catalyzes the formation of carbamoyl phosphate from the ammonia moiety of glutamine, carbonate, and phosphate donated by ATP, constituting the first step of 2 biosynthetic pathways, one leading to arginine and/or urea and the other to pyrimidine nucleotides. The small subunit (glutamine amidotransferase) binds and cleaves glutamine to supply the large subunit with the substrate ammonia. In Escherichia coli O157:H7, this protein is Carbamoyl phosphate synthase small chain.